Consider the following 168-residue polypeptide: Secreted RxLR effector protein RXLR-C06 (168 aa).

A signal peptide spans 1–22; sequence MRIQLLWLSFAVLSTILSTCDA. Residues 25–52 are disordered; it reads DKLDPQRVQPNQNGSGHNQSIRSALKTS. Over residues 32 to 50 the composition is skewed to polar residues; that stretch reads VQPNQNGSGHNQSIRSALK. Residues N37 and N42 are each glycosylated (N-linked (GlcNAc...) asparagine). Residues 46 to 63 carry the RxLR-dEER motif; that stretch reads RSALKTSHGKTIADDEER. The IQ domain maps to 78-107; it reads YKAIVAKLSKYFRDYHERREIRKQRILNKS. Residue N105 is glycosylated (N-linked (GlcNAc...) asparagine).

Belongs to the RxLR effector family.

It is found in the secreted. Its subcellular location is the host Golgi apparatus. In terms of biological role, secreted effector that suppresses pattern-triggered immunity (PTI) in plant host. The protein is Secreted RxLR effector protein RXLR-C06 of Plasmopara halstedii (Downy mildew of sunflower).